Here is a 306-residue protein sequence, read N- to C-terminus: Transcription factor MYBS1 (306 aa).

The region spanning 18 to 73 (WTREDDKAFENALAACAAPPPADGGAPDDDWFAALAASVPGARSAEEVRRHYEALV) is the Myb-like domain. The Nuclear export signal 1 motif lies at 72–86 (LVEDVAAIDAGRVPL). Positions 89-142 (YAGEESAAPPDGAGAAAAASKDGGHRRDERKGGGGGYDGGKSCSKAEQERRKGI) are disordered. Residues 92 to 109 (EESAAPPDGAGAAAAASK) are compositionally biased toward low complexity. Composition is skewed to basic and acidic residues over residues 110-120 (DGGHRRDERKG) and 132-142 (SKAEQERRKGI). Positions 133 to 140 (KAEQERRK) match the Nuclear localization signal 1 motif. In terms of domain architecture, HTH myb-type spans 136–192 (QERRKGIPWTEEEHRLFLLGLDKFGKGDWRSISRNFVISRTPTQVASHAQKYFIRLN). Positions 164–188 (WRSISRNFVISRTPTQVASHAQKYF) form a DNA-binding region, H-T-H motif. The Nuclear localization signal 2 signature appears at 196-200 (RDRRR). Positions 203–215 (IHDITSVTAGDQV) match the Nuclear export signal 2 motif. Residues 228 to 241 (ATGNPAAAALGPPG) show a composition bias toward low complexity. The segment at 228–255 (ATGNPAAAALGPPGMKHHHHHHPGGAPP) is disordered.

In terms of assembly, homodimer. Interacts with GAMYB. Expressed in aboveground tissues, with the highest level in leaves.

Its subcellular location is the nucleus. It localises to the cytoplasm. Its function is as follows. Transcription activator that binds to 5'-TATCCA-3' elements in gene promoters. Derepresses strongly the sugar-repressed transcription of promoters containing SRS or 5'-TATCCA-3' elements. Functions with GAMYB to integrate diverse nutrient starvation and gibberellin (GA) signaling pathways during germination of grains. Sugar, nitrogen and phosphate starvation signals converge and interconnect with GA to promote the co-nuclear import of MYBS1 and GAMYB, resulting in the expression of a large set of GA-inducible hydrolases, transporters, and regulators that are essential for mobilization of nutrient reserves in the endosperm to support seedling growth. The polypeptide is Transcription factor MYBS1 (Oryza sativa subsp. japonica (Rice)).